Here is a 420-residue protein sequence, read N- to C-terminus: Subtilisin (420 aa).

The N-terminal stretch at 1–31 (MKRSGKIFTTAMLAVTLMMPAMGVSANEGNA) is a signal peptide. Residues 32–111 (AAEGNEKFRV…DKPEALYNAM (80 aa)) constitute a propeptide that is removed on maturation. Gln115 serves as a coordination point for Ca(2+). Positions 118-420 (PWGIKAIYNN…ASGFGFATVQ (303 aa)) constitute a Peptidase S8 domain. Asp145 serves as the catalytic Charge relay system. Asp154 lines the Ca(2+) pocket. Catalysis depends on charge relay system residues His182 and Ser360.

This sequence belongs to the peptidase S8 family. Ca(2+) serves as cofactor.

The protein localises to the secreted. The enzyme catalyses Hydrolysis of proteins with broad specificity for peptide bonds, and a preference for a large uncharged residue in P1. Hydrolyzes peptide amides.. Its function is as follows. Subtilisin is an extracellular alkaline serine protease, it catalyzes the hydrolysis of proteins and peptide amides. The sequence is that of Subtilisin (sub1) from Bacillus sp. (strain TA39).